A 382-amino-acid chain; its full sequence is 1-deoxy-D-xylulose 5-phosphate reductoisomerase (382 aa).

NADPH-binding residues include T10, G11, S12, I13, N38, and N120. K121 is a binding site for 1-deoxy-D-xylulose 5-phosphate. E122 contributes to the NADPH binding site. Residue D146 coordinates Mn(2+). The 1-deoxy-D-xylulose 5-phosphate site is built by S147, E148, S172, and H195. Position 148 (E148) interacts with Mn(2+). G201 serves as a coordination point for NADPH. 1-deoxy-D-xylulose 5-phosphate-binding residues include S208, N213, K214, and E217. E217 contributes to the Mn(2+) binding site.

It belongs to the DXR family. It depends on Mg(2+) as a cofactor. Requires Mn(2+) as cofactor.

The enzyme catalyses 2-C-methyl-D-erythritol 4-phosphate + NADP(+) = 1-deoxy-D-xylulose 5-phosphate + NADPH + H(+). It participates in isoprenoid biosynthesis; isopentenyl diphosphate biosynthesis via DXP pathway; isopentenyl diphosphate from 1-deoxy-D-xylulose 5-phosphate: step 1/6. Its function is as follows. Catalyzes the NADPH-dependent rearrangement and reduction of 1-deoxy-D-xylulose-5-phosphate (DXP) to 2-C-methyl-D-erythritol 4-phosphate (MEP). This chain is 1-deoxy-D-xylulose 5-phosphate reductoisomerase, found in Caldanaerobacter subterraneus subsp. tengcongensis (strain DSM 15242 / JCM 11007 / NBRC 100824 / MB4) (Thermoanaerobacter tengcongensis).